The chain runs to 1372 residues: DNA-directed RNA polymerase subunit beta' (1372 aa).

The Zn(2+) site is built by cysteine 69, cysteine 71, cysteine 84, and cysteine 87. Mg(2+)-binding residues include aspartate 460, aspartate 462, and aspartate 464. Residues cysteine 808, cysteine 882, cysteine 889, and cysteine 892 each coordinate Zn(2+).

It belongs to the RNA polymerase beta' chain family. In terms of assembly, the RNAP catalytic core consists of 2 alpha, 1 beta, 1 beta' and 1 omega subunit. When a sigma factor is associated with the core the holoenzyme is formed, which can initiate transcription. Mg(2+) serves as cofactor. Zn(2+) is required as a cofactor.

The catalysed reaction is RNA(n) + a ribonucleoside 5'-triphosphate = RNA(n+1) + diphosphate. Its function is as follows. DNA-dependent RNA polymerase catalyzes the transcription of DNA into RNA using the four ribonucleoside triphosphates as substrates. The protein is DNA-directed RNA polymerase subunit beta' of Rickettsia akari (strain Hartford).